The primary structure comprises 262 residues: MDINASRALANVYDLPDDFFPKIDDLVRDAKDALEPYWKSDSIKKHVLIATHFVDLIEDFWQTTQGMHEIAESLRAVIPPTTAPVPTGYLIQHEEAEEIPLGDLFKHQEERIVSFQPDYPITARIHAHLKAYAKINEESLDRARRLLWWHYNCLLWGEANVTNYISRLRTWLSTPEKYRGRDAPTIEAITRPIQVAQGGRKTSSGTRKPRGLEPRRRKVKTTVVYGRRRSKSRERRAPSPQRAGSPLPRSSSSHHRSPSPRK.

A disordered region spans residues 183 to 262 (APTIEAITRP…SHHRSPSPRK (80 aa)). Positions 215-233 (RRRKVKTTVVYGRRRSKSR) match the Bipartite nuclear localization signal motif. Positions 215 to 234 (RRRKVKTTVVYGRRRSKSRE) are enriched in basic residues. Phosphoserine; by host occurs at positions 232, 239, and 245. Over residues 252 to 262 (SSHHRSPSPRK) the composition is skewed to basic residues. An RNA binding region spans residues 254–260 (HHRSPSP).

The protein belongs to the avihepadnavirus core antigen family. Homodimerizes, then multimerizes.

Its subcellular location is the virion. The protein resides in the host cytoplasm. In terms of biological role, self assembles to form an icosahedral capsid. Most capsid appear to be large particles with an icosahedral symmetry of T=4 and consist of 240 copies of capsid protein, though a fraction forms smaller T=3 particles consisting of 180 capsid proteins. Entering capsid are transported along microtubules to the nucleus. Phosphorylation of the capsid is thought to induce exposure of nuclear localization signal in the C-terminal portion of the capsid protein that allows binding to the nuclear pore complex via the importin (karyopherin-) alpha and beta. Capsids are imported in intact form through the nuclear pore into the nuclear basket, where it probably binds NUP153. Only capsids that contain the mature viral genome can release the viral DNA and capsid protein into the nucleoplasm. Immature capsids get stucked in the basket. Capsids encapsulate the pre-genomic RNA and the P protein. Pre-genomic RNA is reverse transcribed into DNA while the capsid is still in the cytoplasm. The capsid can then either be directed to the nucleus, providing more genome for transcription, or bud through the endoplasmic reticulum to provide new virions. The protein is Capsid protein (C) of Duck hepatitis B virus (strain China) (DHBV).